Consider the following 248-residue polypeptide: 3-oxoacyl-[acyl-carrier-protein] reductase FabG (248 aa).

NADP(+) contacts are provided by residues 14-17 (GGSR), 65-66 (DV), and Asn-92. A substrate-binding site is contributed by Ser-144. The active-site Proton acceptor is the Tyr-157. NADP(+) is bound by residues 157–161 (YAAAK) and Ile-190.

It belongs to the short-chain dehydrogenases/reductases (SDR) family. As to quaternary structure, homotetramer.

It catalyses the reaction a (3R)-hydroxyacyl-[ACP] + NADP(+) = a 3-oxoacyl-[ACP] + NADPH + H(+). Its pathway is lipid metabolism; fatty acid biosynthesis. In terms of biological role, catalyzes the NADPH-dependent reduction of beta-ketoacyl-ACP substrates to beta-hydroxyacyl-ACP products, the first reductive step in the elongation cycle of fatty acid biosynthesis. The sequence is that of 3-oxoacyl-[acyl-carrier-protein] reductase FabG (fabG) from Chlamydia muridarum (strain MoPn / Nigg).